Reading from the N-terminus, the 354-residue chain is Probable glucan endo-1,3-beta-glucosidase BG5 (354 aa).

Positions 1-30 (MLYLPKKLFLFFFSCIVVIVNYNNSDFVNA) are cleaved as a signal peptide. Residue E137 is the Proton donor of the active site. E276 serves as the catalytic Nucleophile. The N-linked (GlcNAc...) asparagine glycan is linked to N286.

The protein belongs to the glycosyl hydrolase 17 family.

It localises to the secreted. The enzyme catalyses Hydrolysis of (1-&gt;3)-beta-D-glucosidic linkages in (1-&gt;3)-beta-D-glucans.. Functionally, may play a role in plant defense against pathogens. In Arabidopsis thaliana (Mouse-ear cress), this protein is Probable glucan endo-1,3-beta-glucosidase BG5.